Here is a 111-residue protein sequence, read N- to C-terminus: uncharacterized protein (111 aa).

Positions 66-94 are disordered; sequence PVPTATPSLPRSGFTSSAKKIKESRKQKS. Residues 70 to 83 are compositionally biased toward polar residues; it reads ATPSLPRSGFTSSA.

It is found in the plastid. The protein localises to the chloroplast. This is an uncharacterized protein from Chlamydomonas reinhardtii (Chlamydomonas smithii).